We begin with the raw amino-acid sequence, 183 residues long: Putative manganese efflux pump MntP (183 aa).

6 consecutive transmembrane segments (helical) span residues 8 to 28 (IIALSMMALALGMDAFSVALG), 40 to 60 (FYIGLTIGLFHILMPLAGMAV), 72 to 92 (ATYAGGALLLWLGGQMIIASF), 108 to 128 (LFFAFSVSLDSFSVGLSLGIF), 133 to 153 (MVTILLFGLFSMVLTWVGLFV), and 163 to 183 (SYSEALGGSILLAFGLKLLFL).

Belongs to the MntP (TC 9.B.29) family.

The protein resides in the cell membrane. Its function is as follows. Probably functions as a manganese efflux pump. This chain is Putative manganese efflux pump MntP, found in Geobacillus kaustophilus (strain HTA426).